The primary structure comprises 651 residues: MAGSAGLSSSPSSPAVRELCKNARDTFLEASRLLLTYADNILRNPYEEKYRSIRNGNPAFSTRLLPVRGAVECLFEMGFQEGETHMVFPKEASIEQLRKVRDLIAVERSSRLNESNQVHRSASSETVAITQAIAHQPSRPAGSVPTPDHQQPEPSLLQSLKMAADILTTLQSKCDHLILAYESTSLQQKALALIPLQQLKEKAQRKLAQATRLDKGEHVNEEDFLLLELLNWFKNDFFHWVDNLPCSRCGGQTEGKRDYLSPTDDDLRWNADRVENHYCSQCQFCNRFPRYNNPEKLLETRRGRCGEWANCFTLCCRAVGFEARYVRDWTDHVWTEVYSASQKRWLHCDPCENVCDKPLLYEIGWGKKLSYVIAFSKDEVVDVTWRYSCKHQEVLTRRTALSEAKLRETINAINKKKQQSLSEGRRKELLERTIVELAEFISPKTPKPGEFGGRTSGSMAWRIARGETGSEERKEVIFIPSEKEKASKLFHLMYNVVEDSYTRISNNNEQITGWGTGIWKAESIARKVETDWKMVYLARKEGSSSASISWKFECKSVGLKIDNISIRTSSQTFHSGRIKWRLYSPTAEVILVGDNSLSSYSDFCGATEVTLEATLSGGDGKAAWQHTQLFRNSLAGCGENCLEMIIKLADL.

Positions 29–90 (EASRLLLTYA…EGETHMVFPK (62 aa)) constitute a PUB domain. Zn(2+) is bound by residues Cys246, Cys249, Cys279, and Cys282. Cys305 acts as the Nucleophile in catalysis. Residues His332 and Asp349 contribute to the active site. Positions 450-651 (EFGGRTSGSM…LEMIIKLADL (202 aa)) constitute a PAW domain.

It belongs to the transglutaminase-like superfamily. PNGase family. The cofactor is Zn(2+).

The protein localises to the cytoplasm. It carries out the reaction Hydrolysis of an N(4)-(acetyl-beta-D-glucosaminyl)asparagine residue in which the glucosamine residue may be further glycosylated, to yield a (substituted) N-acetyl-beta-D-glucosaminylamine and a peptide containing an aspartate residue.. Its function is as follows. Specifically deglycosylates the denatured form of N-linked glycoproteins in the cytoplasm and assists their proteasome-mediated degradation. Cleaves the beta-aspartyl-glucosamine (GlcNAc) of the glycan and the amide side chain of Asn, converting Asn to Asp. Prefers proteins containing high-mannose over those bearing complex type oligosaccharides. Can recognize misfolded proteins in the endoplasmic reticulum that are exported to the cytosol to be destroyed and deglycosylate them, while it has no activity toward native proteins. Deglycosylation is a prerequisite for subsequent proteasome-mediated degradation of some, but not all, misfolded glycoproteins. This is Peptide-N(4)-(N-acetyl-beta-glucosaminyl)asparagine amidase (NGLY1) from Gallus gallus (Chicken).